We begin with the raw amino-acid sequence, 297 residues long: MLEYAIEDFFHFLRIERGLSDNTLSSYKRDLTNYLQYMKDHDKTATWDKISRTDIMGFLYMLKDQGKSTATISRHISSIRSFHQFLIREQITSNDPSLHIETPKKDRKLPDILSQDEVDRLLEIKMNTKLSVRNKAMLELLYATGLRVSELISLNVSDLHLMMGFVQCFGKGSKERIVPLGDTAKHYLEKYISEARDSLIKKNNREDALFVNQHGRRLTRQGFWKILKGLTLEAGILKTITPHTLRHSFATHLLENGADLRLVQEMLGHADISTTQVYTHVTKARLKDMYQSYHPRA.

The 87-residue stretch at 1–87 (MLEYAIEDFF…SIRSFHQFLI (87 aa)) folds into the Core-binding (CB) domain. One can recognise a Tyr recombinase domain in the interval 108-291 (KLPDILSQDE…TKARLKDMYQ (184 aa)). Active-site residues include arginine 147, lysine 171, histidine 243, arginine 246, and histidine 269. Tyrosine 278 acts as the O-(3'-phospho-DNA)-tyrosine intermediate in catalysis.

This sequence belongs to the 'phage' integrase family. XerD subfamily. As to quaternary structure, forms a cyclic heterotetrameric complex composed of two molecules of XerC and two molecules of XerD.

It is found in the cytoplasm. Site-specific tyrosine recombinase, which acts by catalyzing the cutting and rejoining of the recombining DNA molecules. The XerC-XerD complex is essential to convert dimers of the bacterial chromosome into monomers to permit their segregation at cell division. It also contributes to the segregational stability of plasmids. The sequence is that of Tyrosine recombinase XerD from Oceanobacillus iheyensis (strain DSM 14371 / CIP 107618 / JCM 11309 / KCTC 3954 / HTE831).